We begin with the raw amino-acid sequence, 85 residues long: U4-theraphotoxin-Hhn1m (85 aa).

The signal sequence occupies residues 1–22; that stretch reads MKVTLIAILTCAAVLVLHTTAA. A propeptide spanning residues 23–48 is cleaved from the precursor; it reads EELEAESQLVEVGMPDTELAAVDEER. Intrachain disulfides connect C52–C66, C56–C77, and C71–C82.

The protein belongs to the neurotoxin 12 (Hwtx-2) family. 02 (Hwtx-2) subfamily. Expressed by the venom gland.

The protein localises to the secreted. In terms of biological role, postsynaptic neurotoxin. The chain is U4-theraphotoxin-Hhn1m from Cyriopagopus hainanus (Chinese bird spider).